The chain runs to 581 residues: Pentatricopeptide repeat-containing protein At1g34160 (581 aa).

PPR repeat units lie at residues Leu67–Ser101, Asp108–Ala142, Asp143–Arg173, Asp174–Arg208, Ser209–Asp239, Asn240–Lys270, Ser272–Pro306, Asp307–Arg341, and Asn342–Ile372. Positions Leu377 to Lys452 are type E motif. Positions Gly453–Arg483 are type E(+) motif. Positions Glu484–Trp581 are type DYW motif.

This sequence belongs to the PPR family. PCMP-H subfamily.

The sequence is that of Pentatricopeptide repeat-containing protein At1g34160 (PCMP-H68) from Arabidopsis thaliana (Mouse-ear cress).